The following is a 264-amino-acid chain: 3-methyl-2-oxobutanoate hydroxymethyltransferase (264 aa).

Mg(2+)-binding residues include aspartate 41 and aspartate 80. 3-methyl-2-oxobutanoate-binding positions include 41 to 42, aspartate 80, and lysine 109; that span reads DS. Glutamate 111 provides a ligand contact to Mg(2+). Residue glutamate 178 is the Proton acceptor of the active site.

The protein belongs to the PanB family. As to quaternary structure, homodecamer; pentamer of dimers. Mg(2+) is required as a cofactor.

It localises to the cytoplasm. It catalyses the reaction 3-methyl-2-oxobutanoate + (6R)-5,10-methylene-5,6,7,8-tetrahydrofolate + H2O = 2-dehydropantoate + (6S)-5,6,7,8-tetrahydrofolate. The protein operates within cofactor biosynthesis; (R)-pantothenate biosynthesis; (R)-pantoate from 3-methyl-2-oxobutanoate: step 1/2. Its function is as follows. Catalyzes the reversible reaction in which hydroxymethyl group from 5,10-methylenetetrahydrofolate is transferred onto alpha-ketoisovalerate to form ketopantoate. The chain is 3-methyl-2-oxobutanoate hydroxymethyltransferase from Thermosipho melanesiensis (strain DSM 12029 / CIP 104789 / BI429).